A 431-amino-acid chain; its full sequence is Adenylosuccinate synthetase (431 aa).

Residues 12–18 (GDEGKGK) and 40–42 (GHT) each bind GTP. Asp-13 functions as the Proton acceptor in the catalytic mechanism. Asp-13 and Gly-40 together coordinate Mg(2+). Residues 13 to 16 (DEGK), 38 to 41 (NAGH), Thr-129, Arg-143, Gln-224, Thr-239, and Arg-303 each bind IMP. The active-site Proton donor is His-41. Residue 299–305 (TVSNRQR) coordinates substrate. GTP is bound by residues Arg-305, 331-333 (KLD), and 413-415 (STG).

Belongs to the adenylosuccinate synthetase family. As to quaternary structure, homodimer. It depends on Mg(2+) as a cofactor.

The protein resides in the cytoplasm. It carries out the reaction IMP + L-aspartate + GTP = N(6)-(1,2-dicarboxyethyl)-AMP + GDP + phosphate + 2 H(+). Its pathway is purine metabolism; AMP biosynthesis via de novo pathway; AMP from IMP: step 1/2. Functionally, plays an important role in the de novo pathway of purine nucleotide biosynthesis. Catalyzes the first committed step in the biosynthesis of AMP from IMP. This chain is Adenylosuccinate synthetase, found in Ehrlichia canis (strain Jake).